A 1430-amino-acid polypeptide reads, in one-letter code: DNA-directed RNA polymerase subunit beta' (1430 aa).

Zn(2+) contacts are provided by cysteine 70, cysteine 72, cysteine 85, and cysteine 88. Residues aspartate 495, aspartate 497, and aspartate 499 each coordinate Mg(2+). 4 residues coordinate Zn(2+): cysteine 838, cysteine 912, cysteine 919, and cysteine 922.

Belongs to the RNA polymerase beta' chain family. In terms of assembly, the RNAP catalytic core consists of 2 alpha, 1 beta, 1 beta' and 1 omega subunit. When a sigma factor is associated with the core the holoenzyme is formed, which can initiate transcription. Requires Mg(2+) as cofactor. Zn(2+) is required as a cofactor.

It catalyses the reaction RNA(n) + a ribonucleoside 5'-triphosphate = RNA(n+1) + diphosphate. Functionally, DNA-dependent RNA polymerase catalyzes the transcription of DNA into RNA using the four ribonucleoside triphosphates as substrates. The sequence is that of DNA-directed RNA polymerase subunit beta' from Rhodospirillum centenum (strain ATCC 51521 / SW).